The chain runs to 357 residues: Peptide chain release factor 1 (357 aa).

Glutamine 234 is subject to N5-methylglutamine.

This sequence belongs to the prokaryotic/mitochondrial release factor family. Post-translationally, methylated by PrmC. Methylation increases the termination efficiency of RF1.

The protein resides in the cytoplasm. Peptide chain release factor 1 directs the termination of translation in response to the peptide chain termination codons UAG and UAA. This chain is Peptide chain release factor 1, found in Alkaliphilus oremlandii (strain OhILAs) (Clostridium oremlandii (strain OhILAs)).